The sequence spans 110 residues: uncharacterized protein (110 aa).

Positions Met1 to Asp16 are enriched in basic and acidic residues. Disordered stretches follow at residues Met1–Asn29 and Ile73–Asn100. The span at Gly20–Asn29 shows a compositional bias: low complexity.

This is an uncharacterized protein from Dictyostelium discoideum (Social amoeba).